We begin with the raw amino-acid sequence, 645 residues long: L-aspartate oxidase, chloroplastic (645 aa).

The transit peptide at 1 to 70 (MAALMNGFGS…RMRHKVGSIR (70 aa)) directs the protein to the chloroplast. FAD-binding positions include 92-95 (SGVA), lysine 114, 121-128 (NTNYAQGG), and aspartate 292. Arginine 368 acts as the Proton donor/acceptor in catalysis. FAD contacts are provided by residues glutamate 453 and 469-470 (SL).

This sequence belongs to the FAD-dependent oxidoreductase 2 family. NadB subfamily. The cofactor is FAD.

It is found in the plastid. Its subcellular location is the chloroplast. It catalyses the reaction L-aspartate + O2 = iminosuccinate + H2O2. It participates in cofactor biosynthesis; NAD(+) biosynthesis; iminoaspartate from L-aspartate (oxidase route): step 1/1. Functionally, catalyzes the oxidation of L-aspartate to iminoaspartate. This is L-aspartate oxidase, chloroplastic from Oryza sativa subsp. japonica (Rice).